We begin with the raw amino-acid sequence, 211 residues long: Large ribosomal subunit protein uL4 (211 aa).

The disordered stretch occupies residues 42–73 (NNRQGTHSTKDRSEVRGGGIKPWAQKGTGRAR).

It belongs to the universal ribosomal protein uL4 family. As to quaternary structure, part of the 50S ribosomal subunit.

One of the primary rRNA binding proteins, this protein initially binds near the 5'-end of the 23S rRNA. It is important during the early stages of 50S assembly. It makes multiple contacts with different domains of the 23S rRNA in the assembled 50S subunit and ribosome. Functionally, forms part of the polypeptide exit tunnel. The chain is Large ribosomal subunit protein uL4 from Leptospira biflexa serovar Patoc (strain Patoc 1 / Ames).